Consider the following 276-residue polypeptide: Probable endonuclease 4 (276 aa).

Zn(2+) is bound by residues His66, His106, Glu141, Asp175, His178, His210, Asp223, His225, and Glu255.

The protein belongs to the AP endonuclease 2 family. The cofactor is Zn(2+).

The enzyme catalyses Endonucleolytic cleavage to 5'-phosphooligonucleotide end-products.. Its function is as follows. Endonuclease IV plays a role in DNA repair. It cleaves phosphodiester bonds at apurinic or apyrimidinic (AP) sites, generating a 3'-hydroxyl group and a 5'-terminal sugar phosphate. This chain is Probable endonuclease 4, found in Heliobacterium modesticaldum (strain ATCC 51547 / Ice1).